A 167-amino-acid chain; its full sequence is Zymogen granule membrane protein 16 (167 aa).

The first 16 residues, 1-16, serve as a signal peptide directing secretion; sequence MLAVALLVLLCASASA. The region spanning 24–159 is the Jacalin-type lectin domain; the sequence is SSYSGEYGGK…IDSISLHWDT (136 aa).

This sequence belongs to the jacalin lectin family.

The protein localises to the secreted. It localises to the extracellular space. Its subcellular location is the extracellular matrix. It is found in the zymogen granule lumen. The protein resides in the golgi apparatus lumen. Its function is as follows. May play a role in protein trafficking. May act as a linker molecule between the submembranous matrix on the luminal side of zymogen granule membrane (ZGM) and aggregated secretory proteins during granule formation in the TGN. The protein is Zymogen granule membrane protein 16 (Zg16) of Mus musculus (Mouse).